A 341-amino-acid polypeptide reads, in one-letter code: Anthranilate phosphoribosyltransferase (341 aa).

5-phospho-alpha-D-ribose 1-diphosphate is bound by residues G81, 84-85, T89, 91-94, 109-117, and T121; these read GD, NIST, and KHGNRKASS. G81 contacts anthranilate. S93 contacts Mg(2+). N112 serves as a coordination point for anthranilate. Position 167 (R167) interacts with anthranilate. Residues D226 and E227 each coordinate Mg(2+).

Belongs to the anthranilate phosphoribosyltransferase family. As to quaternary structure, homodimer. Mg(2+) is required as a cofactor.

It carries out the reaction N-(5-phospho-beta-D-ribosyl)anthranilate + diphosphate = 5-phospho-alpha-D-ribose 1-diphosphate + anthranilate. The protein operates within amino-acid biosynthesis; L-tryptophan biosynthesis; L-tryptophan from chorismate: step 2/5. Its function is as follows. Catalyzes the transfer of the phosphoribosyl group of 5-phosphorylribose-1-pyrophosphate (PRPP) to anthranilate to yield N-(5'-phosphoribosyl)-anthranilate (PRA). The polypeptide is Anthranilate phosphoribosyltransferase (Parvibaculum lavamentivorans (strain DS-1 / DSM 13023 / NCIMB 13966)).